The following is a 290-amino-acid chain: Ribosomal protein L11 methyltransferase (290 aa).

The S-adenosyl-L-methionine site is built by Thr-135, Gly-158, Asp-180, and Asn-227.

Belongs to the methyltransferase superfamily. PrmA family.

Its subcellular location is the cytoplasm. It carries out the reaction L-lysyl-[protein] + 3 S-adenosyl-L-methionine = N(6),N(6),N(6)-trimethyl-L-lysyl-[protein] + 3 S-adenosyl-L-homocysteine + 3 H(+). Its function is as follows. Methylates ribosomal protein L11. This is Ribosomal protein L11 methyltransferase from Chelativorans sp. (strain BNC1).